We begin with the raw amino-acid sequence, 170 residues long: Large ribosomal subunit protein bL9 (170 aa).

Positions 149–170 are disordered; it reads DGDNEDLDEDNAADENEDYSEE.

It belongs to the bacterial ribosomal protein bL9 family.

Its function is as follows. Binds to the 23S rRNA. In Psychrobacter cryohalolentis (strain ATCC BAA-1226 / DSM 17306 / VKM B-2378 / K5), this protein is Large ribosomal subunit protein bL9.